The sequence spans 380 residues: Chaperone protein DnaJ (380 aa).

Residues 5 to 69 enclose the J domain; sequence DFYEVLGVGR…QKKAAYDQYG (65 aa). A CR-type zinc finger spans residues 135–213; sequence GCSKEIRVPT…CHGQGRVEKT (79 aa). Residues Cys148, Cys151, Cys165, Cys168, Cys187, Cys190, Cys201, and Cys204 each contribute to the Zn(2+) site. CXXCXGXG motif repeat units follow at residues 148-155, 165-172, 187-194, and 201-208; these read CDSCDGSG, CGTCHGQG, CPHCHGRG, and CNSCHGQG.

It belongs to the DnaJ family. In terms of assembly, homodimer. Zn(2+) is required as a cofactor.

It localises to the cytoplasm. Functionally, participates actively in the response to hyperosmotic and heat shock by preventing the aggregation of stress-denatured proteins and by disaggregating proteins, also in an autonomous, DnaK-independent fashion. Unfolded proteins bind initially to DnaJ; upon interaction with the DnaJ-bound protein, DnaK hydrolyzes its bound ATP, resulting in the formation of a stable complex. GrpE releases ADP from DnaK; ATP binding to DnaK triggers the release of the substrate protein, thus completing the reaction cycle. Several rounds of ATP-dependent interactions between DnaJ, DnaK and GrpE are required for fully efficient folding. Also involved, together with DnaK and GrpE, in the DNA replication of plasmids through activation of initiation proteins. The sequence is that of Chaperone protein DnaJ from Photobacterium profundum (strain SS9).